A 50-amino-acid polypeptide reads, in one-letter code: Defensin D2 (50 aa).

Cystine bridges form between Cys-3–Cys-50, Cys-14–Cys-35, Cys-20–Cys-44, and Cys-24–Cys-46.

Post-translationally, contains 4 disulfide bonds.

The protein localises to the secreted. Functionally, antimicrobial peptide active against fungi, Gram-positive and Gram-negative bacteria. Inhibits growth of hyphae in the fungi A.niger (IC(50)=3.5 ug/ml), B.sorokiniana (IC(50)=1.8 ug/ml), F.oxysporum (IC(50)=5.3 ug/ml), F.graminearum (IC(50)=6.9 ug/ml), F.culmorum (IC(50)=6.9 ug/ml) and B.cinerea (IC(50)=13.7 ug/ml). Has no effect on spore germination. Destroys spores in germinated conidia by disruption of cell walls and membranes in A.niger and B.sorokiniana. Causes vacuolization of germinated macro- and microconidia in F.oxysporum, F.graminearum and F.culmorum. Strongly inhibits growth of P.infestans on potato tubers above concentrations of 3.4 ug/ml. Inhibits growth of Gram-positive bacteria C.michiganensis and B.subtilis and of Gram-negative bacteria P.syringae, E.carotovora and E.coli. The protein is Defensin D2 of Nigella sativa (Black cumin).